The sequence spans 375 residues: Serpin B5 (375 aa).

N-linked (GlcNAc...) asparagine glycosylation is found at Asn99, Asn133, Asn188, and Asn361.

Belongs to the serpin family. Ov-serpin subfamily. In terms of assembly, interacts with IRF6. In terms of tissue distribution, normal mammary epithelial cells.

It localises to the secreted. Its subcellular location is the extracellular space. In terms of biological role, tumor suppressor. It blocks the growth, invasion, and metastatic properties of mammary tumors. As it does not undergo the S (stressed) to R (relaxed) conformational transition characteristic of active serpins, it exhibits no serine protease inhibitory activity. The protein is Serpin B5 (SERPINB5) of Homo sapiens (Human).